We begin with the raw amino-acid sequence, 471 residues long: Extracellular endo-alpha-(1-&gt;5)-L-arabinanase (471 aa).

Residues 1 to 19 form the signal peptide; that stretch reads MRFLFLMITLTALTGYILA. D32 acts as the Proton acceptor in catalysis. Substrate-binding positions include D32, G117, 167-170, 187-189, and 219-223; these read NALD, SWF, and HSSME. Residue E223 is the Proton donor of the active site. Residue H314 coordinates Ca(2+).

The protein belongs to the glycosyl hydrolase 43 family. Monomer. Ca(2+) serves as cofactor.

It localises to the secreted. The catalysed reaction is Endohydrolysis of (1-&gt;5)-alpha-arabinofuranosidic linkages in (1-&gt;5)-arabinans.. It participates in glycan metabolism; L-arabinan degradation. Functionally, involved in the degradation of arabinan and is a key enzyme in the complete degradation of the plant cell wall. Catalyzes the internal cleavage of alpha-(1-&gt;5)-L-arabinofuranosyl residues in different arabinan-containing polysaccharides, and releases arabinotriose and arabinobiose as end products. It acts on branched arabinan (from sugar beet), but more slowly when compared to linear or debranched arabinan. This chain is Extracellular endo-alpha-(1-&gt;5)-L-arabinanase, found in Thermotoga petrophila (strain ATCC BAA-488 / DSM 13995 / JCM 10881 / RKU-1).